We begin with the raw amino-acid sequence, 266 residues long: Glutamate racemase (266 aa).

Substrate-binding positions include 9-10 (DS) and 41-42 (YG). Catalysis depends on C73, which acts as the Proton donor/acceptor. Substrate is bound at residue 74–75 (NT). Residue C183 is the Proton donor/acceptor of the active site. 184–185 (TH) is a binding site for substrate.

This sequence belongs to the aspartate/glutamate racemases family.

The enzyme catalyses L-glutamate = D-glutamate. Its pathway is cell wall biogenesis; peptidoglycan biosynthesis. Functionally, provides the (R)-glutamate required for cell wall biosynthesis. This is Glutamate racemase from Shewanella woodyi (strain ATCC 51908 / MS32).